A 436-amino-acid polypeptide reads, in one-letter code: MQGTPAGGTSPGPSPMDRQTLLVFSLILAAALGQMNFTGDQVLRVLAKDEKQLSLLRDLEGLKPQKVDFWRGPARPSLPVDMRVPFSELKYIKAYLESHGLAYSIMIKDIQVLLDEEREAMAKSRRLERSTSSFSYSSYHTLEEISSWIDNFVTEHSDIVSKIQIGNSFENRSILVLKFSTGGSRHPAIWIDTGIHSREWITHATGIWTANKIVSDYGKDRVLTDILKAMDIFIELVTNPDGFAFTHSMNRLWRKNKSIRPGIFCIGVDLNRNWKSGFGGNGSNSNPCSETYHGPSPQSEPEVAAIVNFITAHGNFKALISIHSYSQMLMYPYGRSLEPVSNQRELYDLAKDAVEALYKVHGIEYFFGSISTTLYVASGITVDWAYDSGIKYAFSFELRDTGRYGFLLPATQIIPTAQETWMALRTIMEHTLNHPY.

The first 33 residues, 1–33 (MQGTPAGGTSPGPSPMDRQTLLVFSLILAAALG), serve as a signal peptide directing secretion. A propeptide spans 34 to 126 (QMNFTGDQVL…EREAMAKSRR (93 aa)) (activation peptide). Residues 138–431 (SYHTLEEISS…MALRTIMEHT (294 aa)) form the Peptidase M14 domain. Histidine 196 and glutamate 199 together coordinate Zn(2+). Residues 196 to 199 (HSRE), arginine 254, and 271 to 272 (NR) contribute to the substrate site. An intrachain disulfide couples cysteine 265 to cysteine 288. Histidine 323 is a binding site for Zn(2+). Substrate contacts are provided by residues 324–325 (SY) and tyrosine 375. The Proton donor/acceptor role is filled by glutamate 397.

The protein belongs to the peptidase M14 family. Zn(2+) serves as cofactor.

It is found in the secreted. In Macaca fascicularis (Crab-eating macaque), this protein is Carboxypeptidase A5 (CPA5).